Reading from the N-terminus, the 131-residue chain is Peptide methionine sulfoxide reductase MsrB (131 aa).

Residues 8-130 (LDEWRSMLDP…NSVCIDLRPR (123 aa)) form the MsrB domain. Zn(2+) contacts are provided by cysteine 47, cysteine 50, cysteine 96, and cysteine 99. The active-site Nucleophile is cysteine 119.

Belongs to the MsrB Met sulfoxide reductase family. Requires Zn(2+) as cofactor.

The enzyme catalyses L-methionyl-[protein] + [thioredoxin]-disulfide + H2O = L-methionyl-(R)-S-oxide-[protein] + [thioredoxin]-dithiol. This Pseudomonas putida (strain ATCC 700007 / DSM 6899 / JCM 31910 / BCRC 17059 / LMG 24140 / F1) protein is Peptide methionine sulfoxide reductase MsrB.